The chain runs to 318 residues: Bis(5'-nucleosyl)-tetraphosphatase, symmetrical (318 aa).

The disordered stretch occupies residues Pro269–Asp318. The segment covering Ala282–Gly297 has biased composition (basic residues). Pro residues predominate over residues Ala309–Asp318.

Belongs to the Ap4A hydrolase family.

It carries out the reaction P(1),P(4)-bis(5'-adenosyl) tetraphosphate + H2O = 2 ADP + 2 H(+). Its function is as follows. Hydrolyzes diadenosine 5',5'''-P1,P4-tetraphosphate to yield ADP. The protein is Bis(5'-nucleosyl)-tetraphosphatase, symmetrical of Xanthomonas oryzae pv. oryzae (strain PXO99A).